We begin with the raw amino-acid sequence, 507 residues long: Ribose import ATP-binding protein RbsA (507 aa).

ABC transporter domains lie at 7–242 (LEMR…VGRP) and 253–497 (IPLG…TGVT). 39–46 (GENGAGKS) serves as a coordination point for ATP.

Belongs to the ABC transporter superfamily. Ribose importer (TC 3.A.1.2.1) family. As to quaternary structure, the complex is composed of an ATP-binding protein (RbsA), two transmembrane proteins (RbsC) and a solute-binding protein (RbsB).

The protein resides in the cell inner membrane. The enzyme catalyses D-ribose(out) + ATP + H2O = D-ribose(in) + ADP + phosphate + H(+). In terms of biological role, part of the ABC transporter complex RbsABC involved in ribose import. Responsible for energy coupling to the transport system. The polypeptide is Ribose import ATP-binding protein RbsA (Yersinia pestis bv. Antiqua (strain Antiqua)).